The sequence spans 237 residues: Proteasome subunit beta (237 aa).

A disordered region spans residues 1-27 (MSKFPDLPGMKNLDANPYEPELASFDD). A propeptide spans 1-42 (MSKFPDLPGMKNLDANPYEPELASFDDMDADAGDGDAVAKTG) (removed in mature form; by autocatalysis). Thr-43 (nucleophile) is an active-site residue.

The protein belongs to the peptidase T1B family. In terms of assembly, the 20S proteasome core is composed of 14 alpha and 14 beta subunits that assemble into four stacked heptameric rings, resulting in a barrel-shaped structure. The two inner rings, each composed of seven catalytic beta subunits, are sandwiched by two outer rings, each composed of seven alpha subunits. The catalytic chamber with the active sites is on the inside of the barrel. Has a gated structure, the ends of the cylinder being occluded by the N-termini of the alpha-subunits. Is capped at one or both ends by the proteasome regulatory ATPase, PAN.

Its subcellular location is the cytoplasm. The enzyme catalyses Cleavage of peptide bonds with very broad specificity.. Its activity is regulated as follows. The formation of the proteasomal ATPase PAN-20S proteasome complex, via the docking of the C-termini of PAN into the intersubunit pockets in the alpha-rings, triggers opening of the gate for substrate entry. Interconversion between the open-gate and close-gate conformations leads to a dynamic regulation of the 20S proteasome proteolysis activity. Component of the proteasome core, a large protease complex with broad specificity involved in protein degradation. The protein is Proteasome subunit beta of Halomicrobium mukohataei (strain ATCC 700874 / DSM 12286 / JCM 9738 / NCIMB 13541) (Haloarcula mukohataei).